Consider the following 225-residue polypeptide: Putative N-acetylmannosamine-6-phosphate 2-epimerase (225 aa).

The protein belongs to the NanE family.

It carries out the reaction an N-acyl-D-glucosamine 6-phosphate = an N-acyl-D-mannosamine 6-phosphate. The protein operates within amino-sugar metabolism; N-acetylneuraminate degradation; D-fructose 6-phosphate from N-acetylneuraminate: step 3/5. In terms of biological role, converts N-acetylmannosamine-6-phosphate (ManNAc-6-P) to N-acetylglucosamine-6-phosphate (GlcNAc-6-P). The polypeptide is Putative N-acetylmannosamine-6-phosphate 2-epimerase (Vibrio vulnificus (strain CMCP6)).